The sequence spans 1531 residues: Probable outer membrane protein PmpD (1531 aa).

A signal peptide spans 1–20 (MSSEKDIKSTCSKFSLSVVA). Positions 1244 to 1531 (EFDYSTNVWG…EANTGLRLIF (288 aa)) constitute an Autotransporter domain.

The protein belongs to the PMP outer membrane protein family.

It localises to the secreted. The protein localises to the cell wall. The protein resides in the cell outer membrane. This chain is Probable outer membrane protein PmpD (pmpD), found in Chlamydia trachomatis serovar D (strain ATCC VR-885 / DSM 19411 / UW-3/Cx).